The following is a 942-amino-acid chain: MKISEKWQKEWENKRVFDATPDPNKKKFFTTIAFPYPNSPFHLGHGRTYVTGDIYARYMRMRGYNVLFPMAFHYTGTPIIAMADDVAKGDKELIDIFKSIYEIPDDVISKLVDPLFMANYFKEEIKQAMKEIGLSIDWRREFTTIDPEFSSFIIWQFRKLQEKGFIVRDTHPVGWCPVHHIPVGMHDTKGDMEPEIGEFVLIYFDSDMGILPVATLRPETVFGAIAVWVNPHESYSIVEIDGKKYVMSEKASSKLSFQIDNLKVITVVKGSELVKHSAVNPITGKEVPIIGANFVDPLTGTGVVMSVPAHAPFDYFYLKKTKSELSIISVIRVEGMGETLAKDLVEKSNPQNDNDLKKLTEQVYRIEYNKGVMIDITKLVKPEYVEELKPLVNLPVPAARQKITEFITQKGLGRKIYEIMNRPVYCRCGNEVVVKILKDQWFLDYGNQEWKDLARKSIESIRFIPPEIKKDFEFVVDWLQKRACARTRGLGTPLPWDKKWIIESLSDSTIYMAFYTIAHRLKEHKLKPSQLTYEFWEYIMLGNGNPDEISKISGIPVEVIKAMRDEFLYWYPLDVRHSGKDLVPNHLSFFIFNHAAIFPHQLWPKGIAVNGFVLYDGKKMSKSLRNIVPLRKAIRMYSPDVIRIALTTNADIGSDVNFSDSYAKSIIDTLKNYYDLLEKLKEFKGEDEGFPEKWLKSKFYQMVINVTQYMDSLDLRSSSNEILYNFSSYINEYFELVRSEGREPNGKLLSQILQIWIKLLSPFAPHFAEELWHKIGKNTLVSLESWPIIDQSNVDLFIDLTHTYHRKLLNDIQAILSVYKDTPKSIKIFVANKEFLNVLRDAINIVQKGGQLRQLMEIHKPKGKQDARLYQKIYEEAREIDDDMKKLVTNFDFDEKDLLDKGLKYLSYKLGIKEIRILDASEMDRTKYNKDALPLRPAIIIE.

The short motif at 35–45 (PYPNSPFHLGH) is the 'HIGH' region element. The 'KMSKS' region signature appears at 619 to 623 (KMSKS). K622 contributes to the ATP binding site.

The protein belongs to the class-I aminoacyl-tRNA synthetase family.

It is found in the cytoplasm. It catalyses the reaction tRNA(Leu) + L-leucine + ATP = L-leucyl-tRNA(Leu) + AMP + diphosphate. The polypeptide is Leucine--tRNA ligase 2 (Sulfolobus acidocaldarius (strain ATCC 33909 / DSM 639 / JCM 8929 / NBRC 15157 / NCIMB 11770)).